A 644-amino-acid polypeptide reads, in one-letter code: Protein cueball (644 aa).

The N-terminal stretch at 1 to 26 is a signal peptide; that stretch reads MIRIRFGMDVLLVLLLATCLLSPAHG. The Extracellular portion of the chain corresponds to 27–531; that stretch reads TPLEWDFAVT…VCLTPKVWTS (505 aa). N-linked (GlcNAc...) asparagine glycans are attached at residues Asn82 and Asn108. LDL-receptor class B repeat units follow at residues 121–166, 167–211, and 212–257; these read MNLF…DVCR, RKLY…DQLS, and DRLF…TNDA. 3 N-linked (GlcNAc...) asparagine glycosylation sites follow: Asn175, Asn190, and Asn196. Asn313 carries an N-linked (GlcNAc...) asparagine glycan. EGF-like domains lie at 398 to 430 and 433 to 471; these read EIRE…FTGE and EVSV…ARCE. 5 cysteine pairs are disulfide-bonded: Cys402–Cys411, Cys406–Cys421, Cys437–Cys447, Cys441–Cys459, and Cys461–Cys470. N-linked (GlcNAc...) asparagine glycosylation is found at Asn473 and Asn508. Residues 532 to 552 form a helical membrane-spanning segment; it reads SVIIILVIGIVSSLLLVAVIV. The Cytoplasmic segment spans residues 553–644; the sequence is HGIRRLYKPK…LIHNMEDDLY (92 aa).

It belongs to the cueball family.

The protein localises to the cell membrane. In terms of biological role, has a role in spermatogenesis and oogenesis. The chain is Protein cueball from Drosophila erecta (Fruit fly).